The sequence spans 101 residues: MHIGLTHYVVASGILFAIGLAGIILRRDLIVILMCLEIMLNAANLALVAFSRFNANLLGQVLVFFVITVAAAEVAVGLALIVALYRVKHTTKAEDITMLKF.

3 helical membrane passes run 5-25, 30-50, and 61-81; these read LTHYVVASGILFAIGLAGIIL, IVILMCLEIMLNAANLALVAF, and VLVFFVITVAAAEVAVGLALI.

It belongs to the complex I subunit 4L family. NDH-1 is composed of 14 different subunits. Subunits NuoA, H, J, K, L, M, N constitute the membrane sector of the complex.

The protein localises to the cell inner membrane. The enzyme catalyses a quinone + NADH + 5 H(+)(in) = a quinol + NAD(+) + 4 H(+)(out). Functionally, NDH-1 shuttles electrons from NADH, via FMN and iron-sulfur (Fe-S) centers, to quinones in the respiratory chain. The immediate electron acceptor for the enzyme in this species is believed to be ubiquinone. Couples the redox reaction to proton translocation (for every two electrons transferred, four hydrogen ions are translocated across the cytoplasmic membrane), and thus conserves the redox energy in a proton gradient. This is NADH-quinone oxidoreductase subunit K from Methylacidiphilum infernorum (isolate V4) (Methylokorus infernorum (strain V4)).